We begin with the raw amino-acid sequence, 282 residues long: MPELPEVETVCRGLNELTSGKVIKDAEVLLPRSLASPSSVDEFLSNIRGVIFGEWQRRGKYLLGTLVKESGEAAGWLGVHLRMTGQLLWVNQSEPLQIHTRLRLFCGENKELRFVDIRTFGKVWCVPPKTTPETIITGLKKLGVEPFSDDFSDDYFTTKLNGRQRNIKTLLLDQEIVAGLGNIYADEALFKSGVHPTTLGKNLKPQQIEQLRIAIIEVLETAIEKGGTTFSDFKGVTGINGNYGGTAWVYGRTGEPCRVCGTSIERLKLGGRSAHFCPRCQA.

Proline 2 serves as the catalytic Schiff-base intermediate with DNA. Glutamate 3 acts as the Proton donor in catalysis. The Proton donor; for beta-elimination activity role is filled by lysine 60. Histidine 99, arginine 118, and arginine 163 together coordinate DNA. The segment at 248–282 (WVYGRTGEPCRVCGTSIERLKLGGRSAHFCPRCQA) adopts an FPG-type zinc-finger fold. Residue arginine 272 is the Proton donor; for delta-elimination activity of the active site.

This sequence belongs to the FPG family. As to quaternary structure, monomer. Zn(2+) serves as cofactor.

It catalyses the reaction Hydrolysis of DNA containing ring-opened 7-methylguanine residues, releasing 2,6-diamino-4-hydroxy-5-(N-methyl)formamidopyrimidine.. It carries out the reaction 2'-deoxyribonucleotide-(2'-deoxyribose 5'-phosphate)-2'-deoxyribonucleotide-DNA = a 3'-end 2'-deoxyribonucleotide-(2,3-dehydro-2,3-deoxyribose 5'-phosphate)-DNA + a 5'-end 5'-phospho-2'-deoxyribonucleoside-DNA + H(+). Its function is as follows. Involved in base excision repair of DNA damaged by oxidation or by mutagenic agents. Acts as a DNA glycosylase that recognizes and removes damaged bases. Has a preference for oxidized purines, such as 7,8-dihydro-8-oxoguanine (8-oxoG). Has AP (apurinic/apyrimidinic) lyase activity and introduces nicks in the DNA strand. Cleaves the DNA backbone by beta-delta elimination to generate a single-strand break at the site of the removed base with both 3'- and 5'-phosphates. In Rippkaea orientalis (strain PCC 8801 / RF-1) (Cyanothece sp. (strain PCC 8801)), this protein is Formamidopyrimidine-DNA glycosylase.